A 364-amino-acid polypeptide reads, in one-letter code: Caffeic acid 3-O-methyltransferase 3 (364 aa).

Residue 129–135 (MNQDKVL) participates in substrate binding. A substrate binding region spans residues 161-179 (AFEYHGTDPRFNKVFNKGM). G207, D230, D250, M251, and K264 together coordinate S-adenosyl-L-methionine. The active-site Proton acceptor is H268.

This sequence belongs to the class I-like SAM-binding methyltransferase superfamily. Cation-independent O-methyltransferase family. COMT subfamily. Homodimer.

The enzyme catalyses (E)-caffeate + S-adenosyl-L-methionine = (E)-ferulate + S-adenosyl-L-homocysteine + H(+). It functions in the pathway aromatic compound metabolism; phenylpropanoid biosynthesis. Functionally, catalyzes the conversion of caffeic acid to ferulic acid and of 5-hydroxyferulic acid to sinapic acid. The resulting products may subsequently be converted to the corresponding alcohols that are incorporated into lignins. In Populus kitakamiensis (Aspen), this protein is Caffeic acid 3-O-methyltransferase 3 (HOMT3).